The sequence spans 989 residues: Phosphoenolpyruvate carboxylase (989 aa).

Catalysis depends on residues H175 and K630.

The protein belongs to the PEPCase type 1 family. Mg(2+) is required as a cofactor.

The enzyme catalyses oxaloacetate + phosphate = phosphoenolpyruvate + hydrogencarbonate. Functionally, forms oxaloacetate, a four-carbon dicarboxylic acid source for the tricarboxylic acid cycle. The protein is Phosphoenolpyruvate carboxylase of Prochlorococcus marinus (strain MIT 9215).